A 123-amino-acid polypeptide reads, in one-letter code: Large ribosomal subunit protein uL29 (123 aa).

Lys19 carries the N6-acetyllysine modification. Lys25 is covalently cross-linked (Glycyl lysine isopeptide (Lys-Gly) (interchain with G-Cter in SUMO2)). The residue at position 29 (Ser29) is a Phosphoserine. N6-acetyllysine is present on Lys43. The disordered stretch occupies residues 100 to 123; sequence EKLKTKKQQRKERLYPLRKYAVKA.

It belongs to the universal ribosomal protein uL29 family. Component of the large ribosomal subunit.

Its subcellular location is the cytoplasm. Component of the large ribosomal subunit. The ribosome is a large ribonucleoprotein complex responsible for the synthesis of proteins in the cell. The protein is Large ribosomal subunit protein uL29 (Rpl35) of Mus musculus (Mouse).